The following is a 122-amino-acid chain: Cytochrome b-c1 complex subunit 7-2, mitochondrial (122 aa).

It belongs to the UQCRB/QCR7 family. Component of the ubiquinol-cytochrome c oxidoreductase (cytochrome b-c1 complex, complex III, CIII), a multisubunit enzyme composed of 10 subunits. The complex is composed of 3 respiratory subunits cytochrome b (MT-CYB), cytochrome c1 (CYC1-1 or CYC1-2) and Rieske protein (UCR1-1 or UCR1-2), 2 core protein subunits MPPalpha1 (or MPPalpha2) and MPPB, and 5 low-molecular weight protein subunits QCR7-1 (or QCR7-2), UCRQ-1 (or UCRQ-2), QCR9, UCRY and probably QCR6-1 (or QCR6-2). The complex exists as an obligatory dimer and forms supercomplexes (SCs) in the inner mitochondrial membrane with NADH-ubiquinone oxidoreductase (complex I, CI), resulting in different assemblies (supercomplexes SCI(1)III(2) and SCI(2)III(4)).

The protein resides in the mitochondrion inner membrane. Functionally, component of the ubiquinol-cytochrome c oxidoreductase, a multisubunit transmembrane complex that is part of the mitochondrial electron transport chain which drives oxidative phosphorylation. The respiratory chain contains 3 multisubunit complexes succinate dehydrogenase (complex II, CII), ubiquinol-cytochrome c oxidoreductase (cytochrome b-c1 complex, complex III, CIII) and cytochrome c oxidase (complex IV, CIV), that cooperate to transfer electrons derived from NADH and succinate to molecular oxygen, creating an electrochemical gradient over the inner membrane that drives transmembrane transport and the ATP synthase. The cytochrome b-c1 complex catalyzes electron transfer from ubiquinol to cytochrome c, linking this redox reaction to translocation of protons across the mitochondrial inner membrane, with protons being carried across the membrane as hydrogens on the quinol. In the process called Q cycle, 2 protons are consumed from the matrix, 4 protons are released into the intermembrane space and 2 electrons are passed to cytochrome c. The sequence is that of Cytochrome b-c1 complex subunit 7-2, mitochondrial (QCR7-2) from Arabidopsis thaliana (Mouse-ear cress).